Here is a 449-residue protein sequence, read N- to C-terminus: Putative tartrate transporter (449 aa).

Transmembrane regions (helical) follow at residues 34–54, 64–84, 99–119, 130–150, 156–176, 194–214, 259–279, 292–312, 336–356, 367–387, and 414–434; these read IVPF…NIGF, GFSS…YFLF, IWIA…AFVQ, LLGV…SFWF, AAVT…GSPI, WMFL…LFFL, VIAL…LGIW, IEVG…MVLW, GLAF…LTIV, LWSM…IATI, and GGLY…LILA.

Belongs to the major facilitator superfamily. Phthalate permease family.

The protein localises to the cell membrane. Its function is as follows. Component of the tartrate utilization system and may allow entry of tartrate and tartrate dehydrogenase. The polypeptide is Putative tartrate transporter (ttuB) (Agrobacterium vitis (Rhizobium vitis)).